The primary structure comprises 286 residues: Pyridoxal kinase PdxY (286 aa).

Residues Ser9 and 44-45 (TQ) contribute to the substrate site. 3 residues coordinate ATP: Asp111, Glu148, and Lys181. A substrate-binding site is contributed by Asp222.

Belongs to the pyridoxine kinase family. PdxY subfamily. As to quaternary structure, homodimer. Mg(2+) is required as a cofactor.

The enzyme catalyses pyridoxal + ATP = pyridoxal 5'-phosphate + ADP + H(+). It functions in the pathway cofactor metabolism; pyridoxal 5'-phosphate salvage; pyridoxal 5'-phosphate from pyridoxal: step 1/1. Pyridoxal kinase involved in the salvage pathway of pyridoxal 5'-phosphate (PLP). Catalyzes the phosphorylation of pyridoxal to PLP. The polypeptide is Pyridoxal kinase PdxY (Actinobacillus pleuropneumoniae serotype 5b (strain L20)).